The following is a 772-amino-acid chain: Transducin-like enhancer protein 4 (772 aa).

2 disordered regions span residues 1 to 24 and 183 to 359; these read MIRD…PAQP and LPIK…LTGL. A q domain region spans residues 1–137; sequence MIRDLSKMYP…AIIGQQLQAQ (137 aa). The tract at residues 138 to 205 is GP domain; sequence HLSHAHGLPV…HQRDRDSIKS (68 aa). Residues 184–203 show a composition bias toward basic and acidic residues; that stretch reads PIKDEKKHHDSDHQRDRDSI. Positions 204 to 213 are enriched in low complexity; that stretch reads KSSSVSPSAS. Residues 206–275 form a ccN domain region; the sequence is SSVSPSASFR…SPRGSPAHSP (70 aa). 2 stretches are compositionally biased toward basic and acidic residues: residues 216 to 253 and 274 to 290; these read AAEK…KSDD and SPRE…KKDA. Residues 276–452 form an SP domain region; it reads RENGLDKPRL…GGKPAYSFHV (177 aa). Positions 291-306 are enriched in low complexity; that stretch reads PISPASIASSSSTPSS. Basic and acidic residues predominate over residues 307–316; sequence KSKEHSHNEK. Polar residues predominate over residues 318–329; it reads TTPVSKSNTPTP. 7 WD repeats span residues 484 to 522, 530 to 569, 574 to 613, 616 to 655, 657 to 696, 698 to 737, and 739 to 772; these read NHGE…NKSP, NRDN…PRIK, SSAP…LVRQ, GHTD…QLQQ, DFTS…KYQL, LHES…SIFQ, and KESS…EVIY.

This sequence belongs to the WD repeat Groucho/TLE family. As to quaternary structure, interacts with tcf7, tcf7l1, ripply2.2/bowline, dscr6/ripply3 and foxd3. Associates with tbx6 in the presence of ripply2.2/bowline. Interacts with EFNB1 through the SP domain. Ubiquitinated by XIAP/BIRC4. Expressed at high levels in the spleen and ovary.

It localises to the nucleus. In terms of biological role, transcriptional corepressor. Functions with ripply2.2/bowline to down regulate transcription of tbx6-dependent gene expression. Represses transcription of siamois and nodal3. The sequence is that of Transducin-like enhancer protein 4 (tle4) from Xenopus laevis (African clawed frog).